A 445-amino-acid polypeptide reads, in one-letter code: Methylenetetrahydrofolate--tRNA-(uracil-5-)-methyltransferase TrmFO (445 aa).

9–14 is a binding site for FAD; the sequence is GGGLAG.

It belongs to the MnmG family. TrmFO subfamily. It depends on FAD as a cofactor.

It is found in the cytoplasm. The catalysed reaction is uridine(54) in tRNA + (6R)-5,10-methylene-5,6,7,8-tetrahydrofolate + NADH + H(+) = 5-methyluridine(54) in tRNA + (6S)-5,6,7,8-tetrahydrofolate + NAD(+). It catalyses the reaction uridine(54) in tRNA + (6R)-5,10-methylene-5,6,7,8-tetrahydrofolate + NADPH + H(+) = 5-methyluridine(54) in tRNA + (6S)-5,6,7,8-tetrahydrofolate + NADP(+). In terms of biological role, catalyzes the folate-dependent formation of 5-methyl-uridine at position 54 (M-5-U54) in all tRNAs. The polypeptide is Methylenetetrahydrofolate--tRNA-(uracil-5-)-methyltransferase TrmFO (Rhizorhabdus wittichii (strain DSM 6014 / CCUG 31198 / JCM 15750 / NBRC 105917 / EY 4224 / RW1) (Sphingomonas wittichii)).